The primary structure comprises 408 residues: Putative FBD-associated F-box protein At5g50270 (408 aa).

Positions M1–L54 constitute an F-box domain. The 64-residue stretch at P345 to I408 folds into the FBD domain.

This Arabidopsis thaliana (Mouse-ear cress) protein is Putative FBD-associated F-box protein At5g50270.